A 391-amino-acid chain; its full sequence is 3-ketoacyl-CoA thiolase (391 aa).

Cys95 serves as the catalytic Acyl-thioester intermediate. Catalysis depends on proton acceptor residues His347 and Cys377.

The protein belongs to the thiolase-like superfamily. Thiolase family. Heterotetramer of two alpha chains (FadB) and two beta chains (FadA).

It localises to the cytoplasm. The enzyme catalyses an acyl-CoA + acetyl-CoA = a 3-oxoacyl-CoA + CoA. It functions in the pathway lipid metabolism; fatty acid beta-oxidation. In terms of biological role, catalyzes the final step of fatty acid oxidation in which acetyl-CoA is released and the CoA ester of a fatty acid two carbons shorter is formed. The protein is 3-ketoacyl-CoA thiolase of Alcanivorax borkumensis (strain ATCC 700651 / DSM 11573 / NCIMB 13689 / SK2).